The primary structure comprises 995 residues: Serine-aspartate repeat-containing protein C (995 aa).

Positions 1-50 (MNNKKTATNRKGMIPNRLNKFSIRKYSVGTASILVGTTLIFGLSGHEAKA) are cleaved as a signal peptide. The YSIRK-G/S signaling motif motif lies at 21–32 (FSIRKYSVGTAS). The tract at residues 51 to 164 (AEHTNGELNQ…STTPKTTTIK (114 aa)) is disordered. A ligand binding A region region spans residues 51-495 (AEHTNGELNQ…GSSTANGDQK (445 aa)). Polar residues predominate over residues 56–71 (GELNQSKNETTAPSEN). Residues 72–83 (KTTKKVDSRQLK) show a composition bias toward basic and acidic residues. Positions 84-155 (DNTQTATADQ…SNLTQAKDVS (72 aa)) are enriched in polar residues. 2 CNA-B domains span residues 496-606 (KYNL…YKTP) and 607-717 (KYSL…EEET). The interval 678-975 (TQTGTNTTED…NNSNNGTLFG (298 aa)) is disordered. Composition is skewed to acidic residues over residues 685–695 (TEDDKDADGGE) and 712–934 (YYEE…DSDS). Positions 958-962 (LPETG) match the LPXTG sorting signal motif. A compositionally biased stretch (low complexity) spans 960–975 (ETGSENNNSNNGTLFG). The residue at position 961 (Thr-961) is a Pentaglycyl murein peptidoglycan amidated threonine. The propeptide at 962-995 (GSENNNSNNGTLFGGLFAALGSLLLFGRRKKQNK) is removed by sortase.

It belongs to the serine-aspartate repeat-containing protein (SDr) family. As to quaternary structure, homodimerizes; via N2-Domain. Interacts with host NRXN1; this interaction mediates bacterial attachment to host cells.

The protein localises to the secreted. The protein resides in the cell wall. Functionally, cell surface-associated calcium-binding protein which plays an important role in adhesion and pathogenesis. Mediates interactions with components of the extracellular matrix such as host NRXN1 to promote bacterial adhesion. The polypeptide is Serine-aspartate repeat-containing protein C (sdrC) (Staphylococcus aureus (strain NCTC 8325 / PS 47)).